The chain runs to 473 residues: MAVKTYQAGVTEYRQSYWQPDYAPLDTDLLACFKITPQPGVDREEAAVAVAAESSCGTWTTVWTDLLTDLDYYKGRAYRLEDVPGDDTCFYAFIAYPIDLFEEGSVVNVFTSLVGNVFGFKAVRALRLEDLRFPIAYVKTCGGPPNGIQVERDKLNKYGRLLLGCTIKPKLGLSAKNYGRACYEALRGGLDFTKDDENINSQPFMRWRDRFDFVMEAVQKAEQETGERKGHYLNVTAPTPEEMYKRAEHAKEIGAPIIMHDYLAGGLCANAGLANWCRNNGMLPHVHRAMHAVLDRNPHHGIHFRVLTKILRLSGGDHLHTGTVVGKLEGDRASTLGWIDLLRESFVPEDRSRGIFFDQDWGSMPGAFAVASGGIHVWHMPALVAIFGDDSVLQFGGGTLGHPWGNAAGAHANRVALEACVQARNEGRQIEKEGREILTAAAQHSPELKIAMETWKEIKFEFETMDKLAIANK.

The substrate site is built by asparagine 116 and threonine 166. Catalysis depends on lysine 168, which acts as the Proton acceptor. Lysine 170 lines the substrate pocket. The Mg(2+) site is built by lysine 194, aspartate 196, and glutamate 197. Lysine 194 is subject to N6-carboxylysine. The Proton acceptor role is filled by histidine 287. Substrate is bound by residues arginine 288, histidine 320, and serine 372.

Belongs to the RuBisCO large chain family. Type I subfamily. As to quaternary structure, heterohexadecamer of 8 large chains and 8 small chains. The cofactor is Mg(2+).

The catalysed reaction is 2 (2R)-3-phosphoglycerate + 2 H(+) = D-ribulose 1,5-bisphosphate + CO2 + H2O. The enzyme catalyses D-ribulose 1,5-bisphosphate + O2 = 2-phosphoglycolate + (2R)-3-phosphoglycerate + 2 H(+). RuBisCO catalyzes two reactions: the carboxylation of D-ribulose 1,5-bisphosphate, the primary event in carbon dioxide fixation, as well as the oxidative fragmentation of the pentose substrate. Both reactions occur simultaneously and in competition at the same active site. The chain is Ribulose bisphosphate carboxylase large chain from Nitrosospira sp. (strain TCH716).